Consider the following 113-residue polypeptide: Iron-sulfur cluster assembly protein CyaY (113 aa).

The protein belongs to the frataxin family.

Its function is as follows. Involved in iron-sulfur (Fe-S) cluster assembly. May act as a regulator of Fe-S biogenesis. The protein is Iron-sulfur cluster assembly protein CyaY of Ralstonia nicotianae (strain ATCC BAA-1114 / GMI1000) (Ralstonia solanacearum).